Reading from the N-terminus, the 95-residue chain is Large ribosomal subunit protein uL23 (95 aa).

Belongs to the universal ribosomal protein uL23 family. In terms of assembly, part of the 50S ribosomal subunit. Contacts protein L29, and trigger factor when it is bound to the ribosome.

One of the early assembly proteins it binds 23S rRNA. One of the proteins that surrounds the polypeptide exit tunnel on the outside of the ribosome. Forms the main docking site for trigger factor binding to the ribosome. The sequence is that of Large ribosomal subunit protein uL23 from Geobacillus thermodenitrificans (strain NG80-2).